The sequence spans 375 residues: All-trans-retinol dehydrogenase [NAD(+)] ADH1B (375 aa).

Serine 2 bears the N-acetylserine mark. Serine 23 carries the post-translational modification Phosphoserine. At tyrosine 35 the chain carries Phosphotyrosine. Positions 47, 68, 98, 101, 104, 112, and 175 each coordinate Zn(2+). Residues 200–205 (GLGGVG), aspartate 224, lysine 229, 293–295 (VGV), and arginine 370 contribute to the NAD(+) site.

It belongs to the zinc-containing alcohol dehydrogenase family. Homodimer or heterodimer of closely related subunits. Zn(2+) serves as cofactor.

It is found in the cytoplasm. The enzyme catalyses all-trans-retinol + NAD(+) = all-trans-retinal + NADH + H(+). It catalyses the reaction all-trans-4-hydroxyretinol + NAD(+) = all-trans-4-hydroxyretinal + NADH + H(+). The catalysed reaction is all-trans-4-oxoretinol + NAD(+) = all-trans-4-oxoretinal + NADH + H(+). Functionally, catalyzes the NAD-dependent oxidation of all-trans-retinol and its derivatives such as all-trans-4-hydroxyretinol and may participate in retinoid metabolism. In vitro can also catalyze the NADH-dependent reduction of all-trans-retinal and its derivatives such as all-trans-4-oxoretinal. Catalyzes in the oxidative direction with higher efficiency. Has the same affinity for all-trans-4-hydroxyretinol and all-trans-4-oxoretinal. The chain is All-trans-retinol dehydrogenase [NAD(+)] ADH1B from Pan troglodytes (Chimpanzee).